The primary structure comprises 216 residues: Putative F-box protein At2g03610 (216 aa).

The F-box domain occupies 19-69; the sequence is NQDWSKLCPDLLRPILESLSSIDFHRAKTVCSDWYSVWKTCKGYDSKWNQN.

The sequence is that of Putative F-box protein At2g03610 from Arabidopsis thaliana (Mouse-ear cress).